We begin with the raw amino-acid sequence, 293 residues long: Triacylglycerol lipase (293 aa).

One can recognise an AB hydrolase-1 domain in the interval 10–206 (PILLVHGLFG…YYSWSGIIKG (197 aa)). Residue Leu17 coordinates substrate. The Nucleophile role is filled by Ser83. Gln84 contacts substrate. Residue Asp217 coordinates Ca(2+). Catalysis depends on charge relay system residues Asp238 and His260. Positions 262, 266, and 269 each coordinate Ca(2+).

This sequence belongs to the AB hydrolase superfamily. Pseudomonas lipase family. Requires Ca(2+) as cofactor.

The protein resides in the secreted. The enzyme catalyses a triacylglycerol + H2O = a diacylglycerol + a fatty acid + H(+). In terms of biological role, catalyzes the hydrolysis of triacylglycerols, with the highest activity with tributyrin (C4), lower activity with tricaprylin (C8), and much lower activity with triacetin (C2), trilaurin (C12) and triolein (C18). The protein is Triacylglycerol lipase (lips) of Pseudomonas fragi.